The chain runs to 253 residues: Isoprenyl transferase (253 aa).

The active site involves aspartate 30. Aspartate 30 is a binding site for Mg(2+). Substrate is bound by residues 31–34, tryptophan 35, histidine 51, and 79–81; these read GNRR and STE. The active-site Proton acceptor is the asparagine 82. Substrate-binding positions include phenylalanine 83, arginine 85, arginine 202, and 208-210; that span reads RVS. Glutamate 221 is a binding site for Mg(2+).

It belongs to the UPP synthase family. In terms of assembly, homodimer. Requires Mg(2+) as cofactor.

Functionally, catalyzes the condensation of isopentenyl diphosphate (IPP) with allylic pyrophosphates generating different type of terpenoids. This Chlamydia muridarum (strain MoPn / Nigg) protein is Isoprenyl transferase.